We begin with the raw amino-acid sequence, 346 residues long: O-methyltransferase atr3 (346 aa).

Disordered regions lie at residues 1 to 22 and 52 to 88; these read MTSV…DDLM and GLKS…WYHA. S-adenosyl-L-methionine-binding positions include 190 to 191 and 217 to 218; these read DL and DI.

Belongs to the class I-like SAM-binding methyltransferase superfamily. In terms of assembly, homodimer.

The catalysed reaction is 4-O-demethylbarbatate + S-adenosyl-L-methionine = proatranorin I + S-adenosyl-L-homocysteine. It participates in secondary metabolite biosynthesis; terpenoid biosynthesis. In terms of biological role, O-methyltransferase; part of the gene cluster that mediates the biosynthesis of atranorin, a depside of polyketide origin that accumulates in the cortical or medullary layers of lichen thalli. Atr3 methylates the carboxyl group of 4-O-demethylbarbatic acid to yield proatranorin I. Atr3 is also able to methylate the atr2 product proatranorin III to produce the final compound atranorin. The first step in the pathway is performed by the non-reducing polyketide synthase atr1 that produces 4-O-demethylbarbatic acid composed of two 3-methylorsellinic acid (3MOA) moieties. The pathway continues with the actions of the cytochrome P450 monooygenase atr2 that catalizes the oxidation of c-9 and the O-methyltransferase atr3 that performs the methylation of the carboxyl group to yield atranorin, via the proatranorin II and III intermediates if atr2 acts first, or the proatranorin I intermediate if atr3 acts first. The polypeptide is O-methyltransferase atr3 (Stereocaulon alpinum (Alpine snow lichen)).